Here is a 390-residue protein sequence, read N- to C-terminus: Chorismate synthase (390 aa).

R48 is an NADP(+) binding site. FMN contacts are provided by residues 126–128 (RAS), G286, 301–305 (KPTSS), and R328.

It belongs to the chorismate synthase family. FMNH2 serves as cofactor.

The catalysed reaction is 5-O-(1-carboxyvinyl)-3-phosphoshikimate = chorismate + phosphate. The protein operates within metabolic intermediate biosynthesis; chorismate biosynthesis; chorismate from D-erythrose 4-phosphate and phosphoenolpyruvate: step 7/7. Its function is as follows. Catalyzes the anti-1,4-elimination of the C-3 phosphate and the C-6 proR hydrogen from 5-enolpyruvylshikimate-3-phosphate (EPSP) to yield chorismate, which is the branch point compound that serves as the starting substrate for the three terminal pathways of aromatic amino acid biosynthesis. This reaction introduces a second double bond into the aromatic ring system. The chain is Chorismate synthase from Sulfurisphaera tokodaii (strain DSM 16993 / JCM 10545 / NBRC 100140 / 7) (Sulfolobus tokodaii).